A 531-amino-acid chain; its full sequence is Beta-hexosaminidase subunit beta (531 aa).

Residues 1–21 (MEVLPGLLRLLAALVVAERWA) form the signal peptide. Residues Cys67 and Cys111 are joined by a disulfide bond. N-linked (GlcNAc...) asparagine glycosylation is found at Asn120, Asn164, and Asn301. Cystine bridges form between Cys283–Cys334 and Cys508–Cys525. Residue Glu329 is the Proton donor of the active site.

This sequence belongs to the glycosyl hydrolase 20 family. In terms of assembly, there are 3 forms of beta-hexosaminidase: hexosaminidase A is a heterodimer composed of one subunit alpha and one subunit beta (chain A and B); hexosaminidase B is a homodimer of two beta subunits (two chains A and B); hexosaminidase S is a homodimer of two alpha subunits. The composition of the dimer (isozyme A versus isozyme S) has a significant effect on the substrate specificity of the alpha subunit active site.

It is found in the lysosome. The protein resides in the cytoplasmic vesicle. The protein localises to the secretory vesicle. It localises to the cortical granule. The enzyme catalyses Hydrolysis of terminal non-reducing N-acetyl-D-hexosamine residues in N-acetyl-beta-D-hexosaminides.. The catalysed reaction is N-acetyl-beta-D-galactosaminyl-(1-&gt;4)-beta-D-3-sulfogalactosyl-(1-&gt;4)-beta-D-glucosyl-(1&lt;-&gt;1')-ceramide + H2O = a beta-D-3-sulfogalactosyl-(1-&gt;4)-beta-D-glucosyl-(1&lt;-&gt;1')-ceramide + N-acetyl-beta-D-galactosamine. It carries out the reaction a ganglioside GM2 (d18:1(4E)) + H2O = a ganglioside GM3 (d18:1(4E)) + N-acetyl-beta-D-galactosamine. It catalyses the reaction a ganglioside GM2 + H2O = a ganglioside GM3 + N-acetyl-beta-D-galactosamine. The enzyme catalyses beta-D-GalNAc-(1-&gt;4)-alpha-L-IdoA-(1-&gt;3)-beta-D-GalNAc-4-sulfate-(1-&gt;4)-alpha-L-IdoA-(1-&gt;3)-D-GalNAc-4-sulfate + H2O = alpha-L-IdoA-(1-&gt;3)-beta-D-GalNAc-4-sulfate-(1-&gt;4)-alpha-L-IdoA-(1-&gt;3)-D-GalNAc-4-sulfate + N-acetyl-D-galactosamine. The catalysed reaction is N-acetyl-beta-D-6-sulfogalactosaminyl-(1-&gt;4)-alpha-L-iduronyl-(1-&gt;3)-N-acetyl-D-6-sulfogalactosamine + H2O = alpha-L-iduronyl-(1-&gt;3)-N-acetyl-D-6-sulfogalactosamine + N-acetyl-D-6-sulfogalactosamine. Addition of GM2A stimulates the hydrolysis of sulfated glycosphingolipid SM2 and the ganglioside GM2. Hydrolyzes the non-reducing end N-acetyl-D-hexosamine and/or sulfated N-acetyl-D-hexosamine of glycoconjugates, such as the oligosaccharide moieties from proteins and neutral glycolipids, or from certain mucopolysaccharides. The isozyme B does not hydrolyze each of these substrates, however hydrolyzes efficiently neutral oligosaccharide. Only the isozyme A is responsible for the degradation of GM2 gangliosides in the presence of GM2A. During fertilization is responsible, at least in part, for the zona block to polyspermy. Present in the cortical granules of non-activated oocytes, is exocytosed during the cortical reaction in response to oocyte activation and inactivates the sperm galactosyltransferase-binding site, accounting for the block in sperm binding to the zona pellucida. The chain is Beta-hexosaminidase subunit beta from Sus scrofa (Pig).